The sequence spans 481 residues: Cysteine--tRNA ligase (481 aa).

Cys27 provides a ligand contact to Zn(2+). The 'HIGH' region signature appears at 29 to 39 (PTVYNYAHIGN). The Zn(2+) site is built by Cys222, His247, and Glu251. A 'KMSKS' region motif is present at residues 279–283 (KMSKS). Lys282 provides a ligand contact to ATP.

Belongs to the class-I aminoacyl-tRNA synthetase family. In terms of assembly, monomer. Zn(2+) is required as a cofactor.

It localises to the cytoplasm. The catalysed reaction is tRNA(Cys) + L-cysteine + ATP = L-cysteinyl-tRNA(Cys) + AMP + diphosphate. This chain is Cysteine--tRNA ligase, found in Borrelia turicatae (strain 91E135).